An 861-amino-acid chain; its full sequence is Protein argonaute-4 (861 aa).

The PAZ domain maps to 219-338; that stretch reads PIIEFMCEVL…LPLEVCNIVA (120 aa). Positions 509–820 constitute a Piwi domain; it reads LIVVILPGKT…VAFRARYHLV (312 aa). The interval 825–846 is disordered; it reads DSAEGSHVSGQSNGRDPQALAK.

This sequence belongs to the argonaute family. Ago subfamily. Interacts with EIF4B, IMP8, PRMT5, TNRC6A and TNRC6B. Interacts with ZFP36. In terms of processing, ubiquitinated on surface-exposed lysines by a SCF-like E3 ubiquitin-protein ligase complex containing ZSWIM8 during target-directed microRNA degradation (TDMD), a process that mediates degradation of microRNAs (miRNAs). Ubiquitination by the SCF-like E3 ubiquitin-protein ligase complex containing ZSWIM8 leads to its subsequent degradation, thereby exposing miRNAs for degradation. ZSWIM8 recognizes and binds AGO4 when it is engaged with a TDMD target.

It is found in the cytoplasm. The protein localises to the P-body. Required for RNA-mediated gene silencing (RNAi). Binds to short RNAs such as microRNAs (miRNAs) and represses the translation of mRNAs which are complementary to them. Lacks endonuclease activity and does not appear to cleave target mRNAs. In Mus musculus (Mouse), this protein is Protein argonaute-4 (Ago4).